Here is a 1059-residue protein sequence, read N- to C-terminus: Dihydropyrimidine dehydrogenase [NADP(+)] (1059 aa).

Residues 84–118 form the 4Fe-4S ferredoxin-type 1 domain; the sequence is ERGALKEAMRCLKCADAPCQKSCPTQLDVKSFITS. [4Fe-4S] cluster is bound by residues cysteine 94, cysteine 97, cysteine 102, cysteine 106, cysteine 145, cysteine 151, cysteine 155, and glutamine 171. FAD-binding positions include 207 to 211, 231 to 239, arginine 248, and leucine 274; these read GCGPA and EKRAYIGGL. NADP(+)-binding positions include 354–357, 378–379, arginine 385, 451–453, and 495–501; these read AGDT, RK, AFG, and DVAGVAE. 494 to 503 provides a ligand contact to FAD; sequence GDVAGVAETT. FMN is bound by residues serine 564 and 588–589; that span reads KT. Substrate-binding positions include asparagine 623 and 682-684; that span reads NLS. Cysteine 685 (proton acceptor) is an active-site residue. Lysine 723 is a binding site for FMN. Position 750–751 (750–751) interacts with substrate; sequence NT. FMN-binding positions include glycine 781, 807–809, and 830–831; these read TGG and CS. 2 consecutive 4Fe-4S ferredoxin-type domains span residues 955-987 and 989-1019; these read KVAI…FDPV and HQPH…MVPR. Residues cysteine 964, cysteine 967, cysteine 970, cysteine 974, cysteine 998, cysteine 1001, cysteine 1004, and cysteine 1008 each coordinate [4Fe-4S] cluster.

The protein belongs to the dihydropyrimidine dehydrogenase family. [4Fe-4S] cluster is required as a cofactor. The cofactor is FAD. It depends on FMN as a cofactor.

The enzyme catalyses 5,6-dihydrouracil + NADP(+) = uracil + NADPH + H(+). It functions in the pathway amino-acid biosynthesis; beta-alanine biosynthesis. In terms of biological role, involved in pyrimidine base degradation. Catalyzes the reduction of uracil and thymine. Involved in the degradation of the chemotherapeutic drug 5-fluorouracil. The polypeptide is Dihydropyrimidine dehydrogenase [NADP(+)] (dpyd-1) (Caenorhabditis elegans).